We begin with the raw amino-acid sequence, 397 residues long: Tryptophan synthase beta chain (397 aa).

An N6-(pyridoxal phosphate)lysine modification is found at Lys-87.

The protein belongs to the TrpB family. As to quaternary structure, tetramer of two alpha and two beta chains. Requires pyridoxal 5'-phosphate as cofactor.

It catalyses the reaction (1S,2R)-1-C-(indol-3-yl)glycerol 3-phosphate + L-serine = D-glyceraldehyde 3-phosphate + L-tryptophan + H2O. It functions in the pathway amino-acid biosynthesis; L-tryptophan biosynthesis; L-tryptophan from chorismate: step 5/5. Its function is as follows. The beta subunit is responsible for the synthesis of L-tryptophan from indole and L-serine. The sequence is that of Tryptophan synthase beta chain from Salmonella arizonae (strain ATCC BAA-731 / CDC346-86 / RSK2980).